The primary structure comprises 416 residues: Adenylosuccinate synthetase (416 aa).

GTP is bound by residues 13–19 (GDEGKGK) and 41–43 (GHT). Residue Asp14 is the Proton acceptor of the active site. Residues Asp14 and Gly41 each coordinate Mg(2+). IMP-binding positions include 14–17 (DEGK), 39–42 (NAGH), Thr126, Arg140, Gln220, Thr235, and Arg299. His42 acts as the Proton donor in catalysis. Position 295 to 301 (295 to 301 (TTTGRKR)) interacts with substrate. Residues Arg301, 327–329 (KLD), and 405–407 (STS) each bind GTP.

It belongs to the adenylosuccinate synthetase family. Homodimer. Mg(2+) serves as cofactor.

Its subcellular location is the cytoplasm. It catalyses the reaction IMP + L-aspartate + GTP = N(6)-(1,2-dicarboxyethyl)-AMP + GDP + phosphate + 2 H(+). Its pathway is purine metabolism; AMP biosynthesis via de novo pathway; AMP from IMP: step 1/2. Plays an important role in the de novo pathway of purine nucleotide biosynthesis. Catalyzes the first committed step in the biosynthesis of AMP from IMP. The protein is Adenylosuccinate synthetase of Campylobacter hominis (strain ATCC BAA-381 / DSM 21671 / CCUG 45161 / LMG 19568 / NCTC 13146 / CH001A).